Here is a 428-residue protein sequence, read N- to C-terminus: Enolase (428 aa).

Gln164 contacts (2R)-2-phosphoglycerate. The active-site Proton donor is the Glu206. The Mg(2+) site is built by Asp243, Glu286, and Asp313. (2R)-2-phosphoglycerate contacts are provided by Lys338, Arg367, Ser368, and Lys389. Lys338 acts as the Proton acceptor in catalysis.

Belongs to the enolase family. The cofactor is Mg(2+).

It is found in the cytoplasm. The protein resides in the secreted. It localises to the cell surface. It carries out the reaction (2R)-2-phosphoglycerate = phosphoenolpyruvate + H2O. It participates in carbohydrate degradation; glycolysis; pyruvate from D-glyceraldehyde 3-phosphate: step 4/5. Its function is as follows. Catalyzes the reversible conversion of 2-phosphoglycerate (2-PG) into phosphoenolpyruvate (PEP). It is essential for the degradation of carbohydrates via glycolysis. This Dehalococcoides mccartyi (strain ATCC BAA-2266 / KCTC 15142 / 195) (Dehalococcoides ethenogenes (strain 195)) protein is Enolase.